The chain runs to 383 residues: Transposase InsI for insertion sequence element IS30A (383 aa).

One can recognise an Integrase catalytic domain in the interval 213-379 (VNGTPIHERS…TPKEIIERGV (167 aa)).

This sequence belongs to the transposase IS30 family.

Functionally, required for the transposition of the insertion element. The protein is Transposase InsI for insertion sequence element IS30A (insI1) of Escherichia coli (strain K12).